Here is a 223-residue protein sequence, read N- to C-terminus: Phosphoribosylformylglycinamidine synthase subunit PurQ (223 aa).

Residues 4–223 (RIGVITFPGT…FQSVLSTLVS (220 aa)) enclose the Glutamine amidotransferase type-1 domain. C87 serves as the catalytic Nucleophile. Catalysis depends on residues H195 and E197.

Part of the FGAM synthase complex composed of 1 PurL, 1 PurQ and 2 PurS subunits.

It is found in the cytoplasm. The enzyme catalyses N(2)-formyl-N(1)-(5-phospho-beta-D-ribosyl)glycinamide + L-glutamine + ATP + H2O = 2-formamido-N(1)-(5-O-phospho-beta-D-ribosyl)acetamidine + L-glutamate + ADP + phosphate + H(+). It carries out the reaction L-glutamine + H2O = L-glutamate + NH4(+). The protein operates within purine metabolism; IMP biosynthesis via de novo pathway; 5-amino-1-(5-phospho-D-ribosyl)imidazole from N(2)-formyl-N(1)-(5-phospho-D-ribosyl)glycinamide: step 1/2. Part of the phosphoribosylformylglycinamidine synthase complex involved in the purines biosynthetic pathway. Catalyzes the ATP-dependent conversion of formylglycinamide ribonucleotide (FGAR) and glutamine to yield formylglycinamidine ribonucleotide (FGAM) and glutamate. The FGAM synthase complex is composed of three subunits. PurQ produces an ammonia molecule by converting glutamine to glutamate. PurL transfers the ammonia molecule to FGAR to form FGAM in an ATP-dependent manner. PurS interacts with PurQ and PurL and is thought to assist in the transfer of the ammonia molecule from PurQ to PurL. This chain is Phosphoribosylformylglycinamidine synthase subunit PurQ, found in Corynebacterium jeikeium (strain K411).